The chain runs to 114 residues: MTYVIGSECVDVMDKSCVQECPVDCIYEGARMLYINPDECVDCGACKPACRVEAIYWEGDLPDDQHQHLGDNAAFFHQVLPGRVAPLGSPGGAAAVGPIGVDTPLVAAIPVECP.

Residues cysteine 9 and cysteine 17 each coordinate [3Fe-4S] cluster. 4 residues coordinate [4Fe-4S] cluster: cysteine 21, cysteine 40, cysteine 43, and cysteine 46. One can recognise a 4Fe-4S ferredoxin-type domain in the interval arginine 31 to aspartate 60. Cysteine 50 lines the [3Fe-4S] cluster pocket.

Requires [4Fe-4S] cluster as cofactor. It depends on [3Fe-4S] cluster as a cofactor.

In terms of biological role, ferredoxins are iron-sulfur proteins that transfer electrons in a wide variety of metabolic reactions. The protein is Ferredoxin (fdxA) of Mycobacterium tuberculosis (strain ATCC 25618 / H37Rv).